Reading from the N-terminus, the 226-residue chain is ATP-dependent Clp protease proteolytic subunit 2 (226 aa).

Serine 118 (nucleophile) is an active-site residue. Histidine 143 is a catalytic residue.

It belongs to the peptidase S14 family. Fourteen ClpP subunits assemble into 2 heptameric rings which stack back to back to give a disk-like structure with a central cavity, resembling the structure of eukaryotic proteasomes.

It is found in the cytoplasm. The catalysed reaction is Hydrolysis of proteins to small peptides in the presence of ATP and magnesium. alpha-casein is the usual test substrate. In the absence of ATP, only oligopeptides shorter than five residues are hydrolyzed (such as succinyl-Leu-Tyr-|-NHMec, and Leu-Tyr-Leu-|-Tyr-Trp, in which cleavage of the -Tyr-|-Leu- and -Tyr-|-Trp bonds also occurs).. Functionally, cleaves peptides in various proteins in a process that requires ATP hydrolysis. Has a chymotrypsin-like activity. Plays a major role in the degradation of misfolded proteins. This is ATP-dependent Clp protease proteolytic subunit 2 from Synechocystis sp. (strain ATCC 27184 / PCC 6803 / Kazusa).